The following is a 141-amino-acid chain: Putative pre-16S rRNA nuclease (141 aa).

The protein belongs to the YqgF nuclease family.

Its subcellular location is the cytoplasm. Could be a nuclease involved in processing of the 5'-end of pre-16S rRNA. This chain is Putative pre-16S rRNA nuclease, found in Clostridioides difficile (strain 630) (Peptoclostridium difficile).